A 555-amino-acid polypeptide reads, in one-letter code: Phosphoglucomutase (555 aa).

Residues R22 and S114 each contribute to the alpha-D-glucose 1,6-bisphosphate site. S114 acts as the Phosphoserine intermediate in catalysis. Mg(2+)-binding residues include S114, D279, D281, and D283. The residue at position 114 (S114) is a Phosphoserine. Alpha-D-glucose 1,6-bisphosphate contacts are provided by D283, R284, T347, E366, S368, and K379.

The protein belongs to the phosphohexose mutase family. In terms of assembly, monomer. Mg(2+) serves as cofactor.

It is found in the cytoplasm. It carries out the reaction alpha-D-glucose 1-phosphate = alpha-D-glucose 6-phosphate. The catalysed reaction is O-phospho-L-seryl-[protein] + alpha-D-glucose 1-phosphate = alpha-D-glucose 1,6-bisphosphate + L-seryl-[protein]. It catalyses the reaction alpha-D-glucose 1,6-bisphosphate + L-seryl-[protein] = O-phospho-L-seryl-[protein] + alpha-D-glucose 6-phosphate. Catalyzes the reversible isomerization of alpha-D-glucose 1-phosphate to alpha-D-glucose 6-phosphate. The mechanism proceeds via the intermediate compound alpha-D-glucose 1,6-bisphosphate. Key enzyme in hexose metabolism. The reverse reaction is an essential step for biosynthesis because glucose 1-phosphate is the starting point for the synthesis of UDP-glucose, which acts as a precursor for the synthesis of oligosaccharides and trehalose. This is Phosphoglucomutase (pgmA) from Aspergillus fumigatus (strain ATCC MYA-4609 / CBS 101355 / FGSC A1100 / Af293) (Neosartorya fumigata).